The primary structure comprises 152 residues: 3-dehydroquinate dehydratase (152 aa).

Y26 serves as the catalytic Proton acceptor. Residues N78, H84, and D91 each coordinate substrate. Residue H104 is the Proton donor of the active site. Substrate is bound by residues 105 to 106 and R115; that span reads LS.

Belongs to the type-II 3-dehydroquinase family. As to quaternary structure, homododecamer.

It carries out the reaction 3-dehydroquinate = 3-dehydroshikimate + H2O. It functions in the pathway metabolic intermediate biosynthesis; chorismate biosynthesis; chorismate from D-erythrose 4-phosphate and phosphoenolpyruvate: step 3/7. In terms of biological role, catalyzes a trans-dehydration via an enolate intermediate. The chain is 3-dehydroquinate dehydratase from Idiomarina loihiensis (strain ATCC BAA-735 / DSM 15497 / L2-TR).